A 589-amino-acid chain; its full sequence is WD repeat-containing protein 26 homolog (589 aa).

Positions Met1–Ile57 are disordered. Positions Ser25–Ser39 are enriched in low complexity. The 33-residue stretch at Arg64 to Leu96 folds into the LisH domain. One can recognise a CTLH domain in the interval His97 to Asp154. WD repeat units lie at residues Ser272 to Leu311, Gly317 to Glu358, Gly360 to Trp398, Gln401 to Ile440, Glu442 to Ser480, Gly484 to Glu526, and Gly529 to Gln569.

In terms of assembly, interacts with RANBPM. Expressed in roots, leaves and flowers.

The protein localises to the cytoplasm. In terms of biological role, acts as a component involved in the crosstalk regulation between light, hormone and abiotic stress response. This is WD repeat-containing protein 26 homolog from Arabidopsis thaliana (Mouse-ear cress).